The chain runs to 184 residues: Adenylate kinase 1 (184 aa).

ATP is bound at residue 11-16 (GAGKGT). Residues 31–60 (STGDILRQAMKEQTPLGIKAQSYVDSGELV) form an NMP region. Residues Thr32, Arg37, 58-60 (ELV), 86-89 (GFPR), and Gln93 contribute to the AMP site. Positions 127–133 (SRGRKDD) are LID. Arg128 contacts ATP. 2 residues coordinate AMP: Arg130 and Arg141. An ATP-binding site is contributed by Gln169.

Belongs to the adenylate kinase family. In terms of assembly, monomer.

Its subcellular location is the cytoplasm. The catalysed reaction is AMP + ATP = 2 ADP. The protein operates within purine metabolism; AMP biosynthesis via salvage pathway; AMP from ADP: step 1/1. Its function is as follows. Catalyzes the reversible transfer of the terminal phosphate group between ATP and AMP. Plays an important role in cellular energy homeostasis and in adenine nucleotide metabolism. This Nostoc sp. (strain PCC 7120 / SAG 25.82 / UTEX 2576) protein is Adenylate kinase 1.